The primary structure comprises 422 residues: Target of rapamycin complex 2 subunit bit61 (422 aa).

The segment covering 48-69 (VTTKESNVGDSDTTENIKSPFN) has biased composition (polar residues). The interval 48-101 (VTTKESNVGDSDTTENIKSPFNGQWPFSRRSSQSSSHPVFEETHWSKHSKRPGK) is disordered. Residues S109, S132, and S201 each carry the phosphoserine modification.

This sequence belongs to the BIT61 family. The target of rapamycin complex 2 (TORC2) is composed of at least bit61, pop3/wat1, sin1, ste20 and tor1. In terms of processing, either Thr-23, Thr-25 or Ser-26 and Ser-78 or Ser-79 are phosphorylated as well.

Its subcellular location is the cytoplasm. The protein localises to the nucleus. In terms of biological role, component of TORC2, which regulates multiple cellular processes to control cell growth in response to environmental signals. TORC2 is required for cell survival under various stress conditions. TORC2 positively controls G1 cell-cycle arrest, sexual development and amino acid uptake. Positively regulates amino acid uptake through the control of expression of amino acid permeases. The protein is Target of rapamycin complex 2 subunit bit61 of Schizosaccharomyces pombe (strain 972 / ATCC 24843) (Fission yeast).